Here is a 511-residue protein sequence, read N- to C-terminus: 2-isopropylmalate synthase (511 aa).

A Pyruvate carboxyltransferase domain is found at 6–269 (IIIFDTTLRD…YTDIKCENIS (264 aa)). Positions 15, 203, 205, and 239 each coordinate Mn(2+). Residues 394–511 (VLEKLSVISG…SLKVEERKMA (118 aa)) are regulatory domain.

Belongs to the alpha-IPM synthase/homocitrate synthase family. LeuA type 1 subfamily. As to quaternary structure, homodimer. It depends on Mn(2+) as a cofactor.

Its subcellular location is the cytoplasm. It catalyses the reaction 3-methyl-2-oxobutanoate + acetyl-CoA + H2O = (2S)-2-isopropylmalate + CoA + H(+). The protein operates within amino-acid biosynthesis; L-leucine biosynthesis; L-leucine from 3-methyl-2-oxobutanoate: step 1/4. Its function is as follows. Catalyzes the condensation of the acetyl group of acetyl-CoA with 3-methyl-2-oxobutanoate (2-ketoisovalerate) to form 3-carboxy-3-hydroxy-4-methylpentanoate (2-isopropylmalate). The protein is 2-isopropylmalate synthase of Campylobacter jejuni subsp. doylei (strain ATCC BAA-1458 / RM4099 / 269.97).